We begin with the raw amino-acid sequence, 238 residues long: Sugar fermentation stimulation protein homolog (238 aa).

Belongs to the SfsA family.

This chain is Sugar fermentation stimulation protein homolog, found in Klebsiella pneumoniae subsp. pneumoniae (strain ATCC 700721 / MGH 78578).